The sequence spans 243 residues: Orotidine 5'-phosphate decarboxylase (243 aa).

Residues Asp18, Lys39, 66-75 (DLKFHDIPAT), Thr130, Arg192, Gln201, Gly221, and Arg222 each bind substrate. Catalysis depends on Lys68, which acts as the Proton donor.

This sequence belongs to the OMP decarboxylase family. Type 1 subfamily. In terms of assembly, homodimer.

The catalysed reaction is orotidine 5'-phosphate + H(+) = UMP + CO2. It participates in pyrimidine metabolism; UMP biosynthesis via de novo pathway; UMP from orotate: step 2/2. Catalyzes the decarboxylation of orotidine 5'-monophosphate (OMP) to uridine 5'-monophosphate (UMP). The sequence is that of Orotidine 5'-phosphate decarboxylase from Synechococcus sp. (strain CC9902).